The primary structure comprises 475 residues: uncharacterized protein (475 aa).

Positions 42–292 (NLQNSLTGKT…NTRKGQRHNN (251 aa)) are disordered. Basic and acidic residues-rich tracts occupy residues 59–72 (EANHTSSDKSKSED) and 119–134 (IAEKQVEDRKLSDDSQ). Polar residues-rich tracts occupy residues 150–159 (ITPNFTHTPI) and 220–242 (NNTFGSQTVSSANGKEVPQTSED). The span at 243-263 (SSSQAPHHSSSSGHAPSQQGG) shows a compositional bias: low complexity. Residues 277-289 (FHHKGRNTRKGQR) show a composition bias toward basic residues. The HTH La-type RNA-binding domain maps to 319 to 408 (NPYLCDVQAF…MSIKVRRKET (90 aa)). Residue threonine 408 is modified to Phosphothreonine. Serine 410 carries the post-translational modification Phosphoserine.

Its subcellular location is the cytoplasm. This is an uncharacterized protein from Schizosaccharomyces pombe (strain 972 / ATCC 24843) (Fission yeast).